The chain runs to 58 residues: Bowman-Birk type wound-induced trypsin inhibitor (58 aa).

7 disulfide bridges follow: cysteine 4-cysteine 57, cysteine 5-cysteine 20, cysteine 8-cysteine 53, cysteine 10-cysteine 18, cysteine 27-cysteine 34, cysteine 31-cysteine 46, and cysteine 36-cysteine 44.

Belongs to the Bowman-Birk serine protease inhibitor family.

This chain is Bowman-Birk type wound-induced trypsin inhibitor, found in Medicago sativa (Alfalfa).